The primary structure comprises 188 residues: Ribosome-recycling factor (188 aa).

The protein belongs to the RRF family.

Its subcellular location is the cytoplasm. Responsible for the release of ribosomes from messenger RNA at the termination of protein biosynthesis. May increase the efficiency of translation by recycling ribosomes from one round of translation to another. The protein is Ribosome-recycling factor of Caulobacter sp. (strain K31).